The following is a 162-amino-acid chain: NADH-quinone oxidoreductase subunit I (162 aa).

2 consecutive 4Fe-4S ferredoxin-type domains span residues 53 to 83 and 93 to 122; these read LRRY…IEAE and TRYD…ETRI. [4Fe-4S] cluster contacts are provided by C63, C66, C69, C73, C102, C105, C108, and C112.

This sequence belongs to the complex I 23 kDa subunit family. As to quaternary structure, NDH-1 is composed of 14 different subunits. Subunits NuoA, H, J, K, L, M, N constitute the membrane sector of the complex. [4Fe-4S] cluster serves as cofactor.

It is found in the cell inner membrane. It catalyses the reaction a quinone + NADH + 5 H(+)(in) = a quinol + NAD(+) + 4 H(+)(out). Its function is as follows. NDH-1 shuttles electrons from NADH, via FMN and iron-sulfur (Fe-S) centers, to quinones in the respiratory chain. The immediate electron acceptor for the enzyme in this species is believed to be ubiquinone. Couples the redox reaction to proton translocation (for every two electrons transferred, four hydrogen ions are translocated across the cytoplasmic membrane), and thus conserves the redox energy in a proton gradient. The sequence is that of NADH-quinone oxidoreductase subunit I from Dechloromonas aromatica (strain RCB).